The chain runs to 419 residues: Metacaspase-1 (419 aa).

Residues 1–109 (MSGYPGYNNG…PPQGMHAFGQ (109 aa)) form a disordered region. Pro residues-rich tracts occupy residues 18–37 (QYPP…PPPQ) and 45–61 (QPPP…PPPQ). A compositionally biased stretch (polar residues) spans 83-95 (SVNSNAYTNGNQN). Residues H210 and C266 contribute to the active site.

Belongs to the peptidase C14B family.

Functionally, involved in cell death (apoptosis). In Botryotinia fuckeliana (strain B05.10) (Noble rot fungus), this protein is Metacaspase-1 (casA).